Consider the following 1022-residue polypeptide: ATPase MORC2B (1022 aa).

An N-acetylalanine modification is found at A2. Residues N39, 87-89 (SAK), and 99-105 (RYGNGLK) contribute to the ATP site. A Mg(2+)-binding site is contributed by N39. Positions 285–362 (KTRAEQEVKK…RDAKQQALKE (78 aa)) form a coiled coil. K427 is an ATP binding site. The CW-type zinc-finger motif lies at 490–544 (AMQVPTTIQCDLCLKWRTLPFQLSAVEEGYPINWVCSMNPDPEQDQCEAFELKQK). C499, C502, C525, and C536 together coordinate Zn(2+). Residues 555–583 (KTQEERQKQLTEKIQQEQRKLKALKKIKP) are a coiled coil. Phosphoserine is present on S615. K649 participates in a covalent cross-link: Glycyl lysine isopeptide (Lys-Gly) (interchain with G-Cter in SUMO2). S690, S724, S733, and S737 each carry phosphoserine. K758 participates in a covalent cross-link: Glycyl lysine isopeptide (Lys-Gly) (interchain with G-Cter in SUMO2). Phosphoserine is present on residues S768 and S770. T827 carries the post-translational modification Phosphothreonine. Residues S846 and S851 each carry the phosphoserine modification. A Glycyl lysine isopeptide (Lys-Gly) (interchain with G-Cter in SUMO2) cross-link involves residue K922. A coiled-coil region spans residues 962–1001 (QAKVSEESLRISQKKLQETEEKLQKLRTNIQTLLQMAQQG).

As to quaternary structure, interacts with Morc2a. In terms of tissue distribution, protein is abundant in testes but not detected in other adult tissues examined (at protein level). Detected in germ cells with a distinct developmental-specific expression pattern but not in somatic cells such as Sertoli cells.

The protein localises to the nucleus. It carries out the reaction ATP + H2O = ADP + phosphate + H(+). Required for chromosomal synapsis and meiotic recombination in males and females. This chain is ATPase MORC2B, found in Mus musculus (Mouse).